The chain runs to 353 residues: Melatonin receptor type 1A (353 aa).

Residues 1–32 (MKGNVSELLNATQQAPGGGEGGRPRPSWLAST) are Extracellular-facing. N4 and N10 each carry an N-linked (GlcNAc...) asparagine glycan. Residues 33–53 (LAFILIFTIVVDILGNLLVIL) form a helical membrane-spanning segment. The Cytoplasmic segment spans residues 54-66 (SVYRNKKLRNSGN). Residues 67 to 87 (IFVVSLAVADLVVAVYPYPLV) form a helical membrane-spanning segment. At 88–105 (LTSILNNGWNLGYLHCQV) the chain is on the extracellular side. C103 and C180 are oxidised to a cystine. Residues 106–126 (SAFLMGLSVIGSIFNITGIAM) traverse the membrane as a helical segment. Residues 127–145 (NRYCYICHSLKYDKIYSNK) are Cytoplasmic-facing. A helical transmembrane segment spans residues 146–166 (NSLCYVFLIWMLTLIAIMPNL). Residues 167–190 (QTGTLQYDPRIYSCTFTQSVSSAY) lie on the Extracellular side of the membrane. Residues 191–211 (TIAVVVFHFIVPMIIVIFCYL) form a helical membrane-spanning segment. Topologically, residues 212 to 243 (RIWVLVLQVRRRVKPDNKPKLKPQDFRNFVTM) are cytoplasmic. The chain crosses the membrane as a helical span at residues 244 to 264 (FVVFVLFAICWAPLNLIGLIV). The Extracellular segment spans residues 265–277 (ASDPATMVPRIPE). The helical transmembrane segment at 278–298 (WLFVASYYLAYFNSCLNAIIY) threads the bilayer. Residues 299 to 353 (GLLNQNFRKEYKKIIVSLCTAKMFFVESSNEEADKIKCKPSPLIPNNNLIKVDSV) lie on the Cytoplasmic side of the membrane.

The protein belongs to the G-protein coupled receptor 1 family.

Its subcellular location is the cell membrane. In terms of biological role, high affinity receptor for melatonin. Likely to mediate the reproductive and circadian actions of melatonin. The activity of this receptor is mediated by pertussis toxin sensitive G proteins that inhibit adenylate cyclase activity. Possibly involved in sleep induction, by melatonin activation of the potassium channel KCNMA1/BK and the dissociation of G-beta and G-gamma subunits, thereby decreasing synaptic transmission. This Mus musculus (Mouse) protein is Melatonin receptor type 1A (Mtnr1a).